A 248-amino-acid polypeptide reads, in one-letter code: Mannose-binding protein C (248 aa).

A signal peptide spans 1–20; it reads MSLIPSLSLLLMSMVAASYS. In terms of domain architecture, Collagen-like spans 42 to 99; sequence GINGFPGKDGRDGTKGEKGEPGQGLRGLQGPPGKLGPPGNPGPSGSPGPKGQKGDPGK. Residues 43-107 form a disordered region; the sequence is INGFPGKDGR…GKSPDCDSSL (65 aa). Position 47 is a 4-hydroxyproline (proline 47). Positions 49–61 are enriched in basic and acidic residues; sequence KDGRDGTKGEKGE. 4 positions are modified to 4-hydroxyproline: proline 73, proline 79, proline 82, and proline 88. Residues 75–87 show a composition bias toward pro residues; sequence KLGPPGNPGPSGS. A compositionally biased stretch (basic and acidic residues) spans 93-102; the sequence is QKGDPGKSPD. A coiled-coil region spans residues 112-130; sequence RKALQTEMARIKKWLTFSL. The C-type lectin domain maps to 134–245; sequence VGNKFFLTNG…CSSSHLAVCE (112 aa). Cystine bridges form between cysteine 155–cysteine 244 and cysteine 222–cysteine 236.

Oligomeric complex of 3 or more homotrimers. Interacts with MASP1 and MASP2. Interacts with MEP1A and MEP1B and may inhibit their catalytic activity. Post-translationally, hydroxylation on proline residues within the sequence motif, GXPG, is most likely to be 4-hydroxy as this fits the requirement for 4-hydroxylation in vertebrates.

Its subcellular location is the secreted. Functionally, calcium-dependent lectin involved in innate immune defense. Binds mannose, fucose and N-acetylglucosamine on different microorganisms and activates the lectin complement pathway. Binds to late apoptotic cells, as well as to apoptotic blebs and to necrotic cells, but not to early apoptotic cells, facilitating their uptake by macrophages. This Hylobates lar (Lar gibbon) protein is Mannose-binding protein C (MBL2).